The following is a 1073-amino-acid chain: Pleckstrin homology domain-containing family G member 5 (1073 aa).

Disordered regions lie at residues 1–28, 91–135, 217–261, 278–309, and 367–388; these read MGTG…SQLL, VSTR…ARRR, PGDE…ESSL, GEAG…GINE, and SWEE…RLED. 2 stretches are compositionally biased toward basic and acidic residues: residues 217-231 and 249-260; these read PGDE…KDSK and ERVDPQSRRESS. Residues 367-381 show a composition bias toward acidic residues; that stretch reads SWEEEEEDDEEDEES. In terms of domain architecture, DH spans 406–598; it reads HQQEAVWELL…ERFIHHVNTC (193 aa). The region spanning 654-754 is the PH domain; the sequence is QLLLEGSLRM…WVDTIYNAQN (101 aa). 3 disordered regions span residues 762 to 818, 833 to 873, and 899 to 925; these read QLSA…TSDG, TLSS…GPVD, and PVVE…TPVQ. A compositionally biased stretch (acidic residues) spans 777 to 790; that stretch reads LEEEEDEQEEEGEE. Polar residues-rich tracts occupy residues 791–809 and 844–864; these read SGTS…SNSL and VSSQ…TPTS. A Phosphothreonine modification is found at Thr-793. Ser-798 carries the phosphoserine modification. A compositionally biased stretch (pro residues) spans 900–915; sequence VVEPAPVPQTPSPQPS. Position 909 is a phosphothreonine (Thr-909). Residues Ser-911, Ser-936, and Ser-941 each carry the phosphoserine modification. Residues 993–1046 form a disordered region; that stretch reads MCDPCHGPQLSESENRPSHMTGGPADSARRRCREMPSGTMSRVQSEPPSGVSAQ. The span at 1030-1039 shows a compositional bias: polar residues; that stretch reads GTMSRVQSEP.

Interacts with GIPC1/synectin and RHOA. Expressed in neurons and glial cells of the peripheral nervous system, with highest levels of expression in the brain and sciatic nerve endoneurium. Isoform 2 is expressed at detectable levels only in malignant cells.

It is found in the cytoplasm. The protein resides in the perinuclear region. It localises to the cell membrane. The protein localises to the cell junction. Its subcellular location is the cell projection. It is found in the lamellipodium. In terms of biological role, functions as a guanine exchange factor (GEF) for RAB26 and thus regulates autophagy of synaptic vesicles in axon terminal of motoneurons. Involved in the control of neuronal cell differentiation. Plays a role in angiogenesis through regulation of endothelial cells chemotaxis. Also affects the migration, adhesion, and matrix/bone degradation in macrophages and osteoclasts. This Mus musculus (Mouse) protein is Pleckstrin homology domain-containing family G member 5 (Plekhg5).